The sequence spans 464 residues: Arabinose-proton symporter (464 aa).

The next 12 helical transmembrane spans lie at 21 to 43 (GFVILISCAAGLGGLLYGYDTAV), 63 to 85 (GLVISSIMIGGVVGVGISGFLSD), 92 to 111 (ILMTAALLFAISAIVSALSQ), 116 to 138 (LIIARIIGGLGIGMGSSLSVTYI), 150 to 172 (LSSLYQLFTILGISATYFINLAV), 185 to 207 (GWRWMLAYGMVPSVIFFLVLLVV), 266 to 288 (ALVIGILLALFNQVIGMNAITYY), 303 to 325 (GFVTTCIVGVVEVIFTVIAVLLI), 332 to 354 (KLMSIGSAFMAIFMILIGTSFYF), 364 to 386 (VLILGFVAAFCVSVGPITWIMIS), 398 to 420 (AGIATIFLWGANWAIGQFVPMMI), and 424 to 446 (GLAYTFWIFAVINILCFLFVVTI).

Belongs to the major facilitator superfamily. Sugar transporter (TC 2.A.1.1) family.

It is found in the cell membrane. The catalysed reaction is L-arabinose(in) + H(+)(in) = L-arabinose(out) + H(+)(out). The enzyme catalyses D-galactose(in) + H(+)(in) = D-galactose(out) + H(+)(out). It carries out the reaction D-xylose(in) + H(+)(in) = D-xylose(out) + H(+)(out). Uptake of L-arabinose across the cytoplasmic membrane with the concomitant transport of protons into the cell (symport system). In the presence of inducing amounts of L-arabinose, can import both D-galactose and D-xylose. Can also transport the disaccharide alpha-1,5-arabinobiose. The chain is Arabinose-proton symporter (araE) from Bacillus subtilis (strain 168).